The sequence spans 545 residues: MSAILSADDLNDFISPGVACIKPPAENVNRDTNNENGEVDIQIDNEGNPIEISRLDGTATSLSAAQISLADCLACSGCITSAEEILVAQHSHNELIKALKEKVQNKTDKVFVASISHQSRASLATAYNLTVEEVDRLLINLFINQMGFSYIVGTSLGRKLSLIYESQNIISKKEEKFEGPTLSSICPGWVLYAEKTHPYVLPRISDVKSPQQITGCLLKTLTARDLNTTRDNIYHLSIMPCFDKKLESARPEKGEPESAPNDVDCVLTAKELITLLDEHSDDFSLFPPQVESILSASLVSTTELYTKCAPKNWPFVDLSWSNDNGSSSGGYAYHYIKLAQEHLILKDPSTYQPENFTLKTISGRNSDIYELRLIYKDATVASAAIVNGFRNIQNLVRKLKPSTKQTSTVKANPLASRRRARLASKTDGTASSNNATQDTADASKCDYVEIMACPNGCINGGGQINPPADVPEKEWLTKASENYTNIPSYDLLSAGSNGNMLSELIEWCQEFCKEFDLNQNRLLKTWFHEVEQSTDPNAILLGAKW.

Cys20, Cys72, Cys75, Cys78, Cys186, and Cys241 together coordinate [4Fe-4S] cluster. Positions Pro401–Asp438 are disordered. The span at Thr426 to Asp438 shows a compositional bias: polar residues. [4Fe-4S] cluster is bound by residues Cys453 and Cys457.

This sequence belongs to the NARF family.

Its function is as follows. Component of the cytosolic Fe/S protein assembly machinery. Required for maturation of extramitochondrial Fe/S proteins. May play a role in the transfer of pre-assembled Fe/S clusters to target apoproteins. The sequence is that of Cytosolic Fe-S cluster assembly factor NAR1 (NAR1) from Debaryomyces hansenii (strain ATCC 36239 / CBS 767 / BCRC 21394 / JCM 1990 / NBRC 0083 / IGC 2968) (Yeast).